The sequence spans 840 residues: MNQEVKNKIFSILKITFATALFIFVVITLYRELSGINFKDTLVEFSKINRMSLVLLFIGGGASLVILSMYDVILSRALKMDISLGKVLRVSYIINALNAIVGFGGFIGAGVRAMVYKNYTHDKKKLVHFISLILISMLTGLSLLSLLIVFHVFDASLILNKITWVRWVLYAVSLFLPLFIIYSMVRPPDKNNRYVGLYCTLVSCVEWLAAAVVLYFCGVIVDVHVSFMSFIAIFIIAALSGLVSFIPGGFGAFDLVVLLGFKTLGVPEEKVLLMLLLYRFAYYFVPVIIALILSSFEFGTSAKKYIEGSKYFIPAKDVTSFLMSYQKDIIAKIPSLSLAILVFFTSMIFFVNNLTIVYDALYDGNHLTYYLLLAIHTSACLLLLLNVVGIYKQSRRAIIYAMISIILIIVATLFTYASYILITWLVIIFALLIVAFRRARRLKRPIRMRNLVAMLLFSIFILYINHIFIAGTFYALDVYTIEMHTSVLKYYFWITILIIAIIVGAIAWLFDYQFSKVRISSNIEECEEIIDQYGGNYLSHLIYSGDKQFFTNEDKNAFLMYRYKASSLVVLGDPIGDENAFDELLEAFYNYAEYLGYDVIFYQVTDQHMPLYHNFGNQFFKLGEEAIIDLTQFSTSGKKRRGFRATLNKFDELNISFEIIEPPFSTEFINELQHVSDLWLDNRQEMHFSVGQFNETYLSKAPIGVMRNENNEVIAFCSLMPTYFNDAISVDLIRWLPELDLPLMDGLYLHMLLWSKEQGYTKFNMGMATLSNVGQLHYSYLRERLAGRVFEHFNGLYRFQGLRRYKSKYNPNWEPRFLVYRKDNSLWESLSKVMRVIRHK.

Residues 1 to 8 lie on the Cytoplasmic side of the membrane; it reads MNQEVKNK. A helical membrane pass occupies residues 9–29; that stretch reads IFSILKITFATALFIFVVITL. The Extracellular portion of the chain corresponds to 30–52; that stretch reads YRELSGINFKDTLVEFSKINRMS. Residues 53-73 traverse the membrane as a helical segment; sequence LVLLFIGGGASLVILSMYDVI. Residues 74 to 89 lie on the Cytoplasmic side of the membrane; it reads LSRALKMDISLGKVLR. Residues 90–110 traverse the membrane as a helical segment; sequence VSYIINALNAIVGFGGFIGAG. Residues 111–128 lie on the Extracellular side of the membrane; the sequence is VRAMVYKNYTHDKKKLVH. Residues 129-149 form a helical membrane-spanning segment; that stretch reads FISLILISMLTGLSLLSLLIV. The Cytoplasmic portion of the chain corresponds to 150 to 161; that stretch reads FHVFDASLILNK. A helical membrane pass occupies residues 162 to 182; it reads ITWVRWVLYAVSLFLPLFIIY. At 183–200 the chain is on the extracellular side; it reads SMVRPPDKNNRYVGLYCT. The chain crosses the membrane as a helical span at residues 201-221; the sequence is LVSCVEWLAAAVVLYFCGVIV. Over 222 to 229 the chain is Cytoplasmic; that stretch reads DVHVSFMS. A helical membrane pass occupies residues 230-250; that stretch reads FIAIFIIAALSGLVSFIPGGF. Over 251–271 the chain is Extracellular; it reads GAFDLVVLLGFKTLGVPEEKV. The chain crosses the membrane as a helical span at residues 272–292; it reads LLMLLLYRFAYYFVPVIIALI. Residues 293–337 are Cytoplasmic-facing; the sequence is LSSFEFGTSAKKYIEGSKYFIPAKDVTSFLMSYQKDIIAKIPSLS. The chain crosses the membrane as a helical span at residues 338–358; that stretch reads LAILVFFTSMIFFVNNLTIVY. The Extracellular segment spans residues 359 to 369; it reads DALYDGNHLTY. Residues 370–390 traverse the membrane as a helical segment; the sequence is YLLLAIHTSACLLLLLNVVGI. Residues 391-394 are Cytoplasmic-facing; that stretch reads YKQS. The next 2 helical transmembrane spans lie at 395 to 415 and 416 to 436; these read RRAIIYAMISIILIIVATLFT and YASYILITWLVIIFALLIVAF. The Cytoplasmic portion of the chain corresponds to 437–450; sequence RRARRLKRPIRMRN. A helical transmembrane segment spans residues 451-471; it reads LVAMLLFSIFILYINHIFIAG. Residues 472-489 are Extracellular-facing; it reads TFYALDVYTIEMHTSVLK. A helical transmembrane segment spans residues 490-510; that stretch reads YYFWITILIIAIIVGAIAWLF. Topologically, residues 511–840 are cytoplasmic; it reads DYQFSKVRIS…SKVMRVIRHK (330 aa).

Belongs to the LPG synthase family.

The protein localises to the cell membrane. It carries out the reaction L-lysyl-tRNA(Lys) + a 1,2-diacyl-sn-glycero-3-phospho-(1'-sn-glycerol) = a 1,2-diacyl-sn-glycero-3-phospho-1'-(3'-O-L-lysyl)-sn-glycerol + tRNA(Lys). Functionally, catalyzes the transfer of a lysyl group from L-lysyl-tRNA(Lys) to membrane-bound phosphatidylglycerol (PG), which produces lysylphosphatidylglycerol (LPG), a major component of the bacterial membrane with a positive net charge. LPG synthesis contributes to bacterial virulence as it is involved in the resistance mechanism against cationic antimicrobial peptides (CAMP) produces by the host's immune system (defensins, cathelicidins) and by the competing microorganisms (bacteriocins). In fact, the modification of anionic phosphatidylglycerol with positively charged L-lysine results in repulsion of the peptides. In Staphylococcus aureus (strain MRSA252), this protein is Phosphatidylglycerol lysyltransferase (mprF).